Here is a 148-residue protein sequence, read N- to C-terminus: Large ribosomal subunit protein uL15 (148 aa).

The span at 1–30 shows a compositional bias: basic residues; that stretch reads MPSKLRKTRKLRGHVSHGHGRIGKHRKHPG. The disordered stretch occupies residues 1-38; it reads MPSKLRKTRKLRGHVSHGHGRIGKHRKHPGGRGNAGGM.

This sequence belongs to the universal ribosomal protein uL15 family. In terms of assembly, component of the large ribosomal subunit.

The protein localises to the cytoplasm. Functionally, component of the large ribosomal subunit. The ribosome is a large ribonucleoprotein complex responsible for the synthesis of proteins in the cell. In Xenopus laevis (African clawed frog), this protein is Large ribosomal subunit protein uL15 (rpl27a).